We begin with the raw amino-acid sequence, 675 residues long: Gastrula zinc finger protein xFG20-1 (675 aa).

C2H2-type zinc fingers lie at residues 62–84 (FTCTECGKTFTRKPNYESHIRAH), 90–112 (FSCMVCDKAFAWKSNLLVHYSVH), 118–140 (FSCTECDKTFSNKAQLEKHLRVH), 146–168 (YSCEQCGKSFAHKCVLDSHQRTH), 174–196 (FSCTECGKKFSQRGNLHKHLKTH), 202–224 (HLCAECGKTFSFKSTLLEHQKIH), 257–279 (FPCTECGEIFSNEHELLTHQSTH), 286–308 (FPCTKCWGIFSNEHELRTHQSTH), 344–366 (LPCTECGGTFTNEQELLAHQSTH), and 373–395 (LPCTECGEIFSDEHELLTHQSTH). The interval 302–325 (RTHQSTHTEGQKSLPSTESGGTFS) is disordered. Residues 304-325 (HQSTHTEGQKSLPSTESGGTFS) show a composition bias toward polar residues. Residues 390–407 (THQSTHTSPSTEFGVQTT) show a composition bias toward polar residues. The tract at residues 390-423 (THQSTHTSPSTEFGVQTTEDNHQSPSKDHTGEKP) is disordered. Residues 408–421 (EDNHQSPSKDHTGE) show a composition bias toward basic and acidic residues. 8 C2H2-type zinc fingers span residues 424–446 (FSCSECGKSFFYKSVLKDHLVVH), 452–474 (YHCIECGRSYTHQSSLKSHQRTH), 480–501 (FSCNLCDKLSIISKLRLHYRVH), 507–529 (YPCTECDKTFTKKEQLESHYKVH), 535–557 (YPCQQCGKSFSHKSVLKLHLRTH), 563–585 (FSCTECGKTFTRKPNYESHLTTH), 591–613 (FSCTECGKEFAWKRNLEAHYKMH), and 619–642 (FTCTECGKTFTWKSNLRSHYTTVH).

This sequence belongs to the krueppel C2H2-type zinc-finger protein family.

The protein resides in the nucleus. May be involved in transcriptional regulation. The chain is Gastrula zinc finger protein xFG20-1 from Xenopus laevis (African clawed frog).